The chain runs to 356 residues: MTKENICIVFGGKSAEHEVSILTAQNVLNAIDKDKYHVDIIYITNDGDWRKQNNITAEIKSTDELHLENGEALEISQLLKESSSGQPYDAVFPLLHGPNGEDGTIQGLFEVLDVPYVGNGVLSAASSMDKLVMKQLFEHRGLPQLPYISFLRSEYEKYEHNILKLVNDKLNYPVFVKPANLGSSVGISKCNNEAELKEGIKEAFQFDRKLVIEQGVNAREIEVAVLGNDYPEATWPGEVVKDVAFYDYKSKYKDGKVQLQIPADLDEDVQLTLRNMALEAFKATDCSGLVRADFFVTEDNQIYINETNAMPGFTAFSMYPKLWENMGLSYPELITKLIELAKERHQDKQKNKYKID.

The ATP-grasp domain maps to 134–339 (KQLFEHRGLP…YPELITKLIE (206 aa)). 167 to 222 (NDKLNYPVFVKPANLGSSVGISKCNNEAELKEGIKEAFQFDRKLVIEQGVNAREIE) contributes to the ATP binding site. Residues Asp-293, Glu-306, and Asn-308 each coordinate Mg(2+).

This sequence belongs to the D-alanine--D-alanine ligase family. The cofactor is Mg(2+). Requires Mn(2+) as cofactor.

It localises to the cytoplasm. The enzyme catalyses 2 D-alanine + ATP = D-alanyl-D-alanine + ADP + phosphate + H(+). Its pathway is cell wall biogenesis; peptidoglycan biosynthesis. Its function is as follows. Cell wall formation. This chain is D-alanine--D-alanine ligase, found in Staphylococcus aureus (strain Mu3 / ATCC 700698).